Consider the following 20-residue polypeptide: Protein PR-L1 (20 aa).

It belongs to the BetVI family.

This chain is Protein PR-L1, found in Lupinus luteus (European yellow lupine).